Here is a 196-residue protein sequence, read N- to C-terminus: MDALIMAGGKGTRMGGVEKPLIKLCGRCLIDYVVSPLLKSKVNNIFIATSPNTPKTKEYINSAYKDYKNIVVIDTSGKGYIEDLNECIGYFSEPFLVVSSDLINLKSKIINSIVDYFYCIKAKTPDVEALAVMIPKEKYPNPSIDFNGLVPAGINVVSPKHGYQKEEIMVIDELIFNINTKDDLKLAEMLLKKDGL.

As to quaternary structure, homodimer.

It catalyses the reaction adenosylcob(III)inamide phosphate + GTP + H(+) = adenosylcob(III)inamide-GDP + diphosphate. It functions in the pathway cofactor biosynthesis; adenosylcobalamin biosynthesis. Guanylyltransferase that catalyzes the synthesis of adenosylcobinamide-GDP (AdoCbi-GDP) from adenosylcobinamide-phosphate (AdoCbi-P) and GTP. Is involved in adenosylcobalamin biosynthesis. Binds one GTP per dimer. Cannot use other NTPs or GDP. Does not display AdoCbi kinase activity. Is also able to catalyze the condensation of 2-phospho-L-lactate (LP) with GTP in vitro to form PPi and (2S)-lactyl-2-diphospho-5'-guanosine (LPPG), but is much less efficient than CofC, the presumed enzyme catalyzing this reaction in vivo. This chain is Adenosylcobinamide-phosphate guanylyltransferase (cobY), found in Methanocaldococcus jannaschii (strain ATCC 43067 / DSM 2661 / JAL-1 / JCM 10045 / NBRC 100440) (Methanococcus jannaschii).